Here is a 507-residue protein sequence, read N- to C-terminus: Chromosomal replication initiator protein DnaA (507 aa).

A domain I, interacts with DnaA modulators region spans residues 1–112 (MTDDPGSGFT…PATDEADDTT (112 aa)). The segment at 99 to 155 (RIAPPATDEADDTTVPPSENPATTSPDTTTDNDEIDDSAAARGDNQHSWPSYFTERP) is disordered. Polar residues predominate over residues 113–127 (VPPSENPATTSPDTT). Residues 113-166 (VPPSENPATTSPDTTTDNDEIDDSAAARGDNQHSWPSYFTERPHNTDSATAGVT) form a domain II region. Residues 167-383 (SLNRRYTFDT…GALIRVTAFA (217 aa)) form a domain III, AAA+ region region. Positions 211, 213, 214, and 215 each coordinate ATP. Residues 384–507 (SLNKTPIDKA…TTRIRQRSKR (124 aa)) are domain IV, binds dsDNA.

This sequence belongs to the DnaA family. As to quaternary structure, oligomerizes as a right-handed, spiral filament on DNA at oriC.

Its subcellular location is the cytoplasm. In terms of biological role, plays an essential role in the initiation and regulation of chromosomal replication. ATP-DnaA binds to the origin of replication (oriC) to initiate formation of the DNA replication initiation complex once per cell cycle. Binds the DnaA box (a 9 base pair repeat at the origin) and separates the double-stranded (ds)DNA. Forms a right-handed helical filament on oriC DNA; dsDNA binds to the exterior of the filament while single-stranded (ss)DNA is stabiized in the filament's interior. The ATP-DnaA-oriC complex binds and stabilizes one strand of the AT-rich DNA unwinding element (DUE), permitting loading of DNA polymerase. After initiation quickly degrades to an ADP-DnaA complex that is not apt for DNA replication. Binds acidic phospholipids. In Mycobacterium tuberculosis (strain ATCC 25177 / H37Ra), this protein is Chromosomal replication initiator protein DnaA.